A 328-amino-acid polypeptide reads, in one-letter code: uncharacterized protein (328 aa).

To the C-terminal of para-aminobenzoate synthase component I.

This is an uncharacterized protein from Haemophilus influenzae (strain ATCC 51907 / DSM 11121 / KW20 / Rd).